Here is a 221-residue protein sequence, read N- to C-terminus: Sugar transporter SWEET1 (221 aa).

Transmembrane regions (helical) follow at residues 3–23, 44–63, 68–88, 102–122, 129–149, 160–180, and 186–206; these read AGGV…LGMF, FLPF…YGVL, TLII…LAYL, ATLL…VPDL, LGLF…ADLA, LSFS…IYGF, and YITV…VLFY. The MtN3/slv 1 domain maps to 10-94; that stretch reads FLSSACVLFT…LAYLHYSPQK (85 aa). The MtN3/slv 2 domain maps to 127 to 212; that stretch reads QQLGLFCSVF…VLFYKYPPEQ (86 aa). The segment at 149 to 221 is mediates interaction with TRPV2; that stretch reads AKIIQTKSTQ…QDTKYRLLQT (73 aa).

It belongs to the SWEET sugar transporter family. In terms of assembly, interacts with TRPV2; the interaction probably occurs intracellularly and depends on TRPV2 N-glycosylation.

It is found in the golgi apparatus membrane. Its subcellular location is the cell membrane. In terms of biological role, mediates sugar transport across membranes. May stimulate V(D)J recombination by the activation of RAG1. In Rattus norvegicus (Rat), this protein is Sugar transporter SWEET1 (Slc50a1).